The following is a 1285-amino-acid chain: Transmembrane channel-like protein 1 (1285 aa).

The interval 1–29 is disordered; it reads MQEAARRASLRKEHTPTNEKFGDLSKQDS. Residues 1 to 164 lie on the Cytoplasmic side of the membrane; it reads MQEAARRASL…KIKRIESHFG (164 aa). Residues 165 to 202 traverse the membrane as a helical segment; that stretch reads SVVSSYFTFLRWIVFVNIMITLIALVFVVLPETLADSV. Over 203–260 the chain is Extracellular; the sequence is ANEGRFNRTKTRKQIPANERVHADELAVVWHYDGYLRYSPLFYGYYSDDPFLGNKIKY. An N-linked (GalNAc...) asparagine glycan is attached at asparagine 209. Residues 261–292 traverse the membrane as a helical segment; it reads ALPLAYFMVTLTIFAYSFFAILRKMAANARMS. Over 293 to 349 the chain is Cytoplasmic; the sequence is KLSGSKAEQYIFNWKLFTGWDYTIGNSETASNTVMAVVIKLRESIADIKKDAHGKFR. Residues 350 to 381 traverse the membrane as a helical segment; that stretch reads LLQFSLRVFANIIICAMLGFSIYCIIFAVQKS. The Extracellular portion of the chain corresponds to 382 to 388; sequence QVQDDGN. The helical transmembrane segment at 389 to 416 threads the bilayer; it reads LFTKNQVPSVVSTITHVFPMIFDLIGKM. Topologically, residues 417-420 are cytoplasmic; that stretch reads ENYH. The chain crosses the membrane as a helical span at residues 421–455; the sequence is PRTALRAHLGRVLILYTVNYITLIFALFEKMTALR. The Extracellular segment spans residues 456–667; sequence DRVNSTSTSS…NHDGHNNDIC (212 aa). Residues 458-488 are disordered; the sequence is VNSTSTSSSHRTKRQQGGWNPNMQRPPPYAS. Cysteine 667 and cysteine 816 are disulfide-bonded. The chain crosses the membrane as a helical span at residues 668–705; it reads WETIIGQEIVKLVTMDLIFTILSILVIDLFRGLWIKYC. Positions 696 to 720 are required for interaction with tmie; that stretch reads LFRGLWIKYCSSWWCWDIETTFPEY. Topologically, residues 706–724 are cytoplasmic; it reads SSWWCWDIETTFPEYGEFK. Residues 725–745 traverse the membrane as a helical segment; the sequence is VAENVLHIINNQGMIWLGLFF. Topologically, residues 746–748 are extracellular; the sequence is APL. Residues 749–771 traverse the membrane as a helical segment; sequence LPAINNIKLIILMYIRGWAVMTC. The tract at residues 766-773 is required for interaction with tmie; sequence WAVMTCNV. Topologically, residues 772-785 are cytoplasmic; that stretch reads NVPAREIFRASRSS. The chain crosses the membrane as a helical span at residues 786–809; that stretch reads NFYLGILLIWLLLCTLPVGFVIAS. At 810–852 the chain is on the extracellular side; it reads MSPSRSCGPFARYQHFYTVVTREIEKRVDQTVLSYIRHIASPG. Residues 853-886 traverse the membrane as a helical segment; that stretch reads VVIPIILFLILIIYFLFSLVRGLREANTDLQAQL. At 887 to 1285 the chain is on the cytoplasmic side; sequence VHERTEEKKK…DEDDSPRQID (399 aa). Disordered stretches follow at residues 940–962 and 1114–1285; these read ADHA…DDER and TIKE…RQID. The segment covering 948–961 has biased composition (acidic residues); the sequence is SSEESDINEDEDDE. Basic and acidic residues-rich tracts occupy residues 1121–1131, 1146–1156, and 1167–1182; these read DPGKSDKKQTS, DEARALREKMK, and TVEE…ESEF. Acidic residues predominate over residues 1197-1208; sequence TEEENEEEETDS.

The protein belongs to the TMC family. As to quaternary structure, homodimer. Interacts with calm-1 and tmie to form the MET channel. In terms of tissue distribution, expressed in the ASH polymodal avoidance neurons. Also expressed in other sensory neurons, including the ADF, ASE, ADL, AQR, PQR, URX and PHA cells.

Its subcellular location is the cell membrane. It carries out the reaction Na(+)(in) = Na(+)(out). It catalyses the reaction Ca(2+)(in) = Ca(2+)(out). The enzyme catalyses K(+)(in) = K(+)(out). Pore-forming subunit of the mechanotransducer (MET) non-selective cation channel complex. The MET complex is composed of symmetric dimeric MET channels, each channel comprising two copies of pore-forming ion-conducting transmembrane TMC subunits and auxiliary proteins including the transmembrane inner ear protein/tmie, the calcium-binding protein/calm-1 and arrestin domain protein arrd-6. Sodium ions are the most permeable, whereas calcium and potassium have lower indices. Sodium-sensor ion channel that acts specifically in salt taste chemosensation. Required for salt-evoked neuronal activity and behavioral avoidance of high concentrations of NaCl. The polypeptide is Transmembrane channel-like protein 1 (tmc-1) (Caenorhabditis elegans).